The chain runs to 692 residues: Elongation factor G 2 (692 aa).

Positions 8-283 constitute a tr-type G domain; it reads EKTRNIGIMA…SVVAYLPSPL (276 aa). GTP is bound by residues 17–24, 81–85, and 135–138; these read AHIDAGKT, DTPGH, and NKMD.

It belongs to the TRAFAC class translation factor GTPase superfamily. Classic translation factor GTPase family. EF-G/EF-2 subfamily.

It localises to the cytoplasm. In terms of biological role, catalyzes the GTP-dependent ribosomal translocation step during translation elongation. During this step, the ribosome changes from the pre-translocational (PRE) to the post-translocational (POST) state as the newly formed A-site-bound peptidyl-tRNA and P-site-bound deacylated tRNA move to the P and E sites, respectively. Catalyzes the coordinated movement of the two tRNA molecules, the mRNA and conformational changes in the ribosome. The protein is Elongation factor G 2 of Geobacter sulfurreducens (strain ATCC 51573 / DSM 12127 / PCA).